Consider the following 262-residue polypeptide: MQRLTIRDFLKKKGKEKITMLTVYDYSMAKILSETEVDGFLVGDSLGMNVLGFPSTLQVTMDHMIHHTRAVVRASPRQLIVVDMPFMSYEPSNEVAVKNAGILASEGADAVKLEGGVEVYERVANIVKFGVPVMGHIGLTPQRYLTLGGYRTVKDEAKLISDALALEEAGAFSIVIENVYAEIAKKITEKVSIPTICIGAGPHCDGQVLVIHDLLGMGDIQPYFSRKYLDLKAEIREAVKRYINDVKTGTFPGRENYKSRES.

2 residues coordinate Mg(2+): D44 and D83. 3-methyl-2-oxobutanoate is bound by residues 44–45, D83, and K112; that span reads DS. E114 is a Mg(2+) binding site. E177 functions as the Proton acceptor in the catalytic mechanism.

It belongs to the PanB family. Homodecamer; pentamer of dimers. Mg(2+) serves as cofactor.

The protein localises to the cytoplasm. It catalyses the reaction 3-methyl-2-oxobutanoate + (6R)-5,10-methylene-5,6,7,8-tetrahydrofolate + H2O = 2-dehydropantoate + (6S)-5,6,7,8-tetrahydrofolate. It functions in the pathway cofactor biosynthesis; coenzyme A biosynthesis. Functionally, catalyzes the reversible reaction in which hydroxymethyl group from 5,10-methylenetetrahydrofolate is transferred onto alpha-ketoisovalerate to form ketopantoate. In Metallosphaera sedula (strain ATCC 51363 / DSM 5348 / JCM 9185 / NBRC 15509 / TH2), this protein is 3-methyl-2-oxobutanoate hydroxymethyltransferase.